Consider the following 431-residue polypeptide: Glutamate-1-semialdehyde 2,1-aminomutase (431 aa).

Lys269 bears the N6-(pyridoxal phosphate)lysine mark.

The protein belongs to the class-III pyridoxal-phosphate-dependent aminotransferase family. HemL subfamily. As to quaternary structure, homodimer. The cofactor is pyridoxal 5'-phosphate.

It is found in the cytoplasm. It catalyses the reaction (S)-4-amino-5-oxopentanoate = 5-aminolevulinate. It participates in porphyrin-containing compound metabolism; protoporphyrin-IX biosynthesis; 5-aminolevulinate from L-glutamyl-tRNA(Glu): step 2/2. Its pathway is porphyrin-containing compound metabolism; chlorophyll biosynthesis. The protein is Glutamate-1-semialdehyde 2,1-aminomutase of Chlorobaculum parvum (strain DSM 263 / NCIMB 8327) (Chlorobium vibrioforme subsp. thiosulfatophilum).